A 360-amino-acid chain; its full sequence is Metalloendoproteinase 5-MMP (360 aa).

A signal peptide spans 1–20 (MRTLLLTILIFFFTVNPISA). Positions 21 to 142 (KFYTNVSSIP…GGKILRTTEK (122 aa)) are cleaved as a propeptide — activation peptide. N25, N36, and N78 each carry an N-linked (GlcNAc...) asparagine glycan. Residues 117–124 (PRCGNPDL) carry the Cysteine switch motif. Position 119 (C119) interacts with Zn(2+). Residues N168 and N191 are each glycosylated (N-linked (GlcNAc...) asparagine). H270 is a Zn(2+) binding site. E271 is an active-site residue. H274 and H280 together coordinate Zn(2+). Residues 312–336 (LYGGNPNGDGGGSKPSRESQSTGGD) are disordered. Residue S337 is the site of GPI-anchor amidated serine attachment. A propeptide spans 338 to 360 (VRRWRGWMISLSSIATCIFLISV) (removed in mature form).

It belongs to the peptidase M10A family. Matrix metalloproteinases (MMPs) subfamily. Zn(2+) serves as cofactor. In terms of tissue distribution, mostly expressed in leaves, roots and stems, and, to a lower extent, in flowers.

It is found in the cell membrane. With respect to regulation, repressed by acetohydroxamic acid (AHA). In terms of biological role, matrix metalloproteinases (MMPs) or matrixins may play a role in the degradation and remodeling of the extracellular matrix (ECM) during development or in response to stresses. Active on Mca-KESAbuNLFVLKDpaR-NH(2) (QF75) and, to some extent, on McaPLGLDpaAR-NH(2) (QF24), myelin basic protein (MBP) and beta-casein. The polypeptide is Metalloendoproteinase 5-MMP (Arabidopsis thaliana (Mouse-ear cress)).